Here is a 347-residue protein sequence, read N- to C-terminus: Large ribosomal subunit protein uL3 (347 aa).

The protein belongs to the universal ribosomal protein uL3 family. In terms of assembly, part of the 50S ribosomal subunit. Forms a cluster with proteins L14 and L24e.

Functionally, one of the primary rRNA binding proteins, it binds directly near the 3'-end of the 23S rRNA, where it nucleates assembly of the 50S subunit. In Caldivirga maquilingensis (strain ATCC 700844 / DSM 13496 / JCM 10307 / IC-167), this protein is Large ribosomal subunit protein uL3.